The following is a 192-amino-acid chain: Phosphoheptose isomerase (192 aa).

One can recognise an SIS domain in the interval 37 to 192 (IAASLRDGGK…IMLIEKELAV (156 aa)). 52-54 (NGG) contributes to the substrate binding site. H61 and E65 together coordinate Zn(2+). Substrate-binding positions include E65, 93–94 (ND), 119–121 (STS), S124, and Q172. Q172 and H180 together coordinate Zn(2+).

Belongs to the SIS family. GmhA subfamily. Homotetramer. Zn(2+) is required as a cofactor.

It is found in the cytoplasm. It catalyses the reaction 2 D-sedoheptulose 7-phosphate = D-glycero-alpha-D-manno-heptose 7-phosphate + D-glycero-beta-D-manno-heptose 7-phosphate. Its pathway is carbohydrate biosynthesis; D-glycero-D-manno-heptose 7-phosphate biosynthesis; D-glycero-alpha-D-manno-heptose 7-phosphate and D-glycero-beta-D-manno-heptose 7-phosphate from sedoheptulose 7-phosphate: step 1/1. Catalyzes the isomerization of sedoheptulose 7-phosphate in D-glycero-D-manno-heptose 7-phosphate. This Tolumonas auensis (strain DSM 9187 / NBRC 110442 / TA 4) protein is Phosphoheptose isomerase.